Here is an 876-residue protein sequence, read N- to C-terminus: Alanine--tRNA ligase (876 aa).

Zn(2+) contacts are provided by histidine 565, histidine 569, cysteine 667, and histidine 671.

The protein belongs to the class-II aminoacyl-tRNA synthetase family. Requires Zn(2+) as cofactor.

It localises to the cytoplasm. The enzyme catalyses tRNA(Ala) + L-alanine + ATP = L-alanyl-tRNA(Ala) + AMP + diphosphate. Its function is as follows. Catalyzes the attachment of alanine to tRNA(Ala) in a two-step reaction: alanine is first activated by ATP to form Ala-AMP and then transferred to the acceptor end of tRNA(Ala). Also edits incorrectly charged Ser-tRNA(Ala) and Gly-tRNA(Ala) via its editing domain. This chain is Alanine--tRNA ligase, found in Staphylococcus saprophyticus subsp. saprophyticus (strain ATCC 15305 / DSM 20229 / NCIMB 8711 / NCTC 7292 / S-41).